The primary structure comprises 260 residues: 3-alpha-(or 20-beta)-hydroxysteroid dehydrogenase (260 aa).

Arg17, Met19, Asp38, Asp61, Val62, Asn88, Tyr153, Lys157, Val186, Thr188, and Thr191 together coordinate NAD(+). Tyr153 serves as the catalytic Proton acceptor.

This sequence belongs to the short-chain dehydrogenases/reductases (SDR) family. In terms of assembly, homotetramer.

The catalysed reaction is androstan-3alpha,17beta-diol + NAD(+) = 17beta-hydroxyandrostanone + NADH + H(+). Its pathway is lipid metabolism; steroid degradation. Its function is as follows. Probably involved in steroid metabolism. The protein is 3-alpha-(or 20-beta)-hydroxysteroid dehydrogenase (fabG3) of Mycobacterium bovis (strain ATCC BAA-935 / AF2122/97).